Reading from the N-terminus, the 631-residue chain is Vacuolar-sorting receptor 6 (631 aa).

Residues 1-25 (MSLIHKGATLALFLALTMVVNGVFG) form the signal peptide. The Lumenal portion of the chain corresponds to 26-563 (RFIVEKSSVT…CIERSGSRIG (538 aa)). The 109-residue stretch at 57–165 (NYGGYMIGSV…SFANTLKQAL (109 aa)) folds into the PA domain. Residues Asn294 and Asn431 are each glycosylated (N-linked (GlcNAc...) asparagine). 2 EGF-like domains span residues 413-463 (ETNE…TSCE) and 494-540 (ETSG…FECK). Cystine bridges form between Cys417–Cys435, Cys424–Cys444, Cys446–Cys462, Cys498–Cys511, and Cys530–Cys539. A helical transmembrane segment spans residues 564–584 (WFPTFVILAAVASICVGGYVF). At 585–631 (YKYRLRSYMDSEIMAIMSQYMPLESQNTTDPMTGESQHQQLRLTSAA) the chain is on the cytoplasmic side. Positions 604–607 (YMPL) match the Tyrosine-based internalization motif motif. Positions 610–631 (QNTTDPMTGESQHQQLRLTSAA) are disordered.

This sequence belongs to the VSR (BP-80) family. As to expression, expressed in seedlings, roots, leaves, flowers and siliques.

The protein localises to the membrane. It localises to the golgi apparatus membrane. The protein resides in the cytoplasmic vesicle. Its subcellular location is the clathrin-coated vesicle membrane. It is found in the prevacuolar compartment membrane. Its function is as follows. Vacuolar-sorting receptor (VSR) involved in clathrin-coated vesicles sorting from Golgi apparatus to vacuoles. This Arabidopsis thaliana (Mouse-ear cress) protein is Vacuolar-sorting receptor 6 (VSR6).